The primary structure comprises 64 residues: Large ribosomal subunit protein bL33 (64 aa).

This sequence belongs to the bacterial ribosomal protein bL33 family.

In Microcystis aeruginosa (strain NIES-843 / IAM M-2473), this protein is Large ribosomal subunit protein bL33.